Consider the following 228-residue polypeptide: MDWGREFFKWRGYEETVKLQEELSKKIILEDKFKELRYIGGVDTSSLGEKIVGIITILVFKTLELVEISVALSEVNFPYIPGFLSFREGPVILRAWEKLKIKPDLLIFDGQGIAHPRRLGIASHIGYVLDVPSIGCAKNILVGFYKEPDKRKGSFEYIYHKGEIVGAAVRTKDNVKPVFVSLGHKISLNTSIDIILKTSTKYRIPEPVRLAHLYSKRMLNSEIEGEPF.

Positions 43 and 109 each coordinate Mg(2+).

Belongs to the endonuclease V family. It depends on Mg(2+) as a cofactor.

The protein localises to the cytoplasm. The enzyme catalyses Endonucleolytic cleavage at apurinic or apyrimidinic sites to products with a 5'-phosphate.. In terms of biological role, DNA repair enzyme involved in the repair of deaminated bases. Selectively cleaves double-stranded DNA at the second phosphodiester bond 3' to a deoxyinosine leaving behind the intact lesion on the nicked DNA. This is Endonuclease V from Dictyoglomus turgidum (strain DSM 6724 / Z-1310).